Consider the following 171-residue polypeptide: MEYNTSALCDIYLDQVDVVEPMFSNFGGCASFAGQITTIKCYEDNGLIRETLEQDGLGRILLIDGGGSLRRALIDAELAALAEENEWEGIVVYGSVREVDELEEMSIGIQAIASIPVGATSQGIGEVDIPVNFGGVTFLPEDYLYADNTGIIISQEPLSADLGEEEEDELL.

The protein belongs to the RraA family. As to quaternary structure, homotrimer. Binds to both RNA-binding sites in the C-terminal region of Rne and to RhlB.

The protein localises to the cytoplasm. Its function is as follows. Globally modulates RNA abundance by binding to RNase E (Rne) and regulating its endonucleolytic activity. Can modulate Rne action in a substrate-dependent manner by altering the composition of the degradosome. Modulates RNA-binding and helicase activities of the degradosome. This Vibrio cholerae serotype O1 (strain ATCC 39315 / El Tor Inaba N16961) protein is Regulator of ribonuclease activity A.